Here is a 364-residue protein sequence, read N- to C-terminus: Homeobox protein Nkx-2.3 (364 aa).

Positions 132–153 are disordered; that stretch reads GDCKAAEESERPKPRSRRKPRV. Over residues 135–144 the composition is skewed to basic and acidic residues; that stretch reads KAAEESERPK. The homeobox DNA-binding region spans 148 to 207; sequence RRKPRVLFSQAQVFELERRFKQQRYLSAPEREHLASSLKLTSTQVKIWFQNRRYKCKRQR.

The protein belongs to the NK-2 homeobox family.

Its subcellular location is the nucleus. Its function is as follows. Transcription factor. The polypeptide is Homeobox protein Nkx-2.3 (NKX2-3) (Homo sapiens (Human)).